The primary structure comprises 222 residues: Ribonuclease HII (222 aa).

In terms of domain architecture, RNase H type-2 spans 32-222 (FHIAGVDEVG…LIKRYKEDIS (191 aa)). Residues Asp-38, Glu-39, and Asp-130 each coordinate a divalent metal cation.

This sequence belongs to the RNase HII family. It depends on Mn(2+) as a cofactor. The cofactor is Mg(2+).

The protein resides in the cytoplasm. It catalyses the reaction Endonucleolytic cleavage to 5'-phosphomonoester.. Endonuclease that specifically degrades the RNA of RNA-DNA hybrids. The polypeptide is Ribonuclease HII (Bartonella bacilliformis (strain ATCC 35685 / KC583 / Herrer 020/F12,63)).